The following is a 365-amino-acid chain: Flagellar P-ring protein (365 aa).

The first 21 residues, 1-21, serve as a signal peptide directing secretion; the sequence is MIKRIISIVFLLLTLPQLALA.

This sequence belongs to the FlgI family. As to quaternary structure, the basal body constitutes a major portion of the flagellar organelle and consists of four rings (L,P,S, and M) mounted on a central rod.

It localises to the periplasm. It is found in the bacterial flagellum basal body. Assembles around the rod to form the L-ring and probably protects the motor/basal body from shearing forces during rotation. The polypeptide is Flagellar P-ring protein (Geobacter metallireducens (strain ATCC 53774 / DSM 7210 / GS-15)).